A 285-amino-acid chain; its full sequence is V-set and transmembrane domain-containing protein 2B (285 aa).

Positions 1–28 (MEQRNRLGALGYLPPLLLHALLLFVADA) are cleaved as a signal peptide. Residues 29–143 (AFTEVPKDVT…DDDTQEHKAQ (115 aa)) form the Ig-like V-type domain. Residues 29–263 (AFTEVPKDVT…HGSGTGRSYT (235 aa)) lie on the Extracellular side of the membrane. Residues cysteine 49 and cysteine 127 are joined by a disulfide bond. The segment at 161 to 226 (EAVSHIQSSG…EAAAASAAHT (66 aa)) is disordered. Low complexity-rich tracts occupy residues 177–189 (ASAANANNAGAAS) and 208–226 (PAAIDPAVPEAAAASAAHT). Residues 264–284 (TDPLLSLLLLALHKFLRLLLG) traverse the membrane as a helical segment. A topological domain (cytoplasmic) is located at residue histidine 285.

It localises to the membrane. The sequence is that of V-set and transmembrane domain-containing protein 2B (VSTM2B) from Homo sapiens (Human).